The sequence spans 544 residues: Putative glycerol-3-phosphate transporter 4 (544 aa).

A run of 6 helical transmembrane segments spans residues 28–47 (TFRY…YHAS), 121–141 (VAFL…GDSL), 156–176 (FFVG…WFFL), 181–201 (AAGL…GNWF), 218–238 (SVGN…GWGW), and 240–260 (FIAP…FLAA). Residues 281-313 (KRDVEEEEEEVEEDLGTDVEGDGEGSSGSGSGY) form a disordered region. Positions 285–303 (EEEEEEVEEDLGTDVEGDG) are enriched in acidic residues. 7 helical membrane passes run 319–339 (VGLL…CLFF), 342–362 (LVAY…TIGG), 371–391 (GNLS…CGYI), 402–422 (AAAF…YGGV), 428–448 (ILLM…ITTA), 471–491 (AIID…TGFL), and 494–514 (LGWQ…GLLL).

This sequence belongs to the major facilitator superfamily. Organophosphate:Pi antiporter (OPA) (TC 2.A.1.4) family.

It is found in the membrane. This Arabidopsis thaliana (Mouse-ear cress) protein is Putative glycerol-3-phosphate transporter 4.